A 209-amino-acid chain; its full sequence is FMN-dependent NADH:quinone oxidoreductase (209 aa).

FMN contacts are provided by residues Ser18, 102 to 105 (MYNF), and 146 to 149 (SRGG).

Belongs to the azoreductase type 1 family. In terms of assembly, homodimer. It depends on FMN as a cofactor.

The enzyme catalyses 2 a quinone + NADH + H(+) = 2 a 1,4-benzosemiquinone + NAD(+). It carries out the reaction N,N-dimethyl-1,4-phenylenediamine + anthranilate + 2 NAD(+) = 2-(4-dimethylaminophenyl)diazenylbenzoate + 2 NADH + 2 H(+). Quinone reductase that provides resistance to thiol-specific stress caused by electrophilic quinones. Its function is as follows. Also exhibits azoreductase activity. Catalyzes the reductive cleavage of the azo bond in aromatic azo compounds to the corresponding amines. This Saccharophagus degradans (strain 2-40 / ATCC 43961 / DSM 17024) protein is FMN-dependent NADH:quinone oxidoreductase.